The following is a 56-amino-acid chain: MAVQKNRKTRSKRGMRRSHDALGTATMSVDSTSGETHVRHHVTADGYYKGKKVLSL.

The span at 1–16 (MAVQKNRKTRSKRGMR) shows a compositional bias: basic residues. The segment at 1-37 (MAVQKNRKTRSKRGMRRSHDALGTATMSVDSTSGETH) is disordered. Polar residues predominate over residues 25–35 (ATMSVDSTSGE).

This sequence belongs to the bacterial ribosomal protein bL32 family.

The chain is Large ribosomal subunit protein bL32 from Pseudoalteromonas atlantica (strain T6c / ATCC BAA-1087).